A 231-amino-acid polypeptide reads, in one-letter code: Ion-translocating oxidoreductase complex subunit E (231 aa).

The next 6 helical transmembrane spans lie at 18-38 (ALVQLLGLCPLLAVTSTATNA), 39-59 (LGLGLATTLVLTLTNLTISTL), 63-83 (TPAEIRIPIYVMIIASVVSAV), 86-106 (LINAYAFGLYQSLGIFIPLIV), 125-145 (ALSALDGFSIGMGATCAMFVL), and 182-202 (PFLLAMLPPGAFIGLGLMLAG).

Belongs to the NqrDE/RnfAE family. The complex is composed of six subunits: RsxA, RsxB, RsxC, RsxD, RsxE and RsxG.

Its subcellular location is the cell inner membrane. Part of a membrane-bound complex that couples electron transfer with translocation of ions across the membrane. Required to maintain the reduced state of SoxR. The protein is Ion-translocating oxidoreductase complex subunit E of Escherichia coli (strain SE11).